The primary structure comprises 316 residues: Ribosomal RNA small subunit methyltransferase H (316 aa).

S-adenosyl-L-methionine-binding positions include 35–37 (AGH), D55, F84, D105, and Q112.

The protein belongs to the methyltransferase superfamily. RsmH family.

Its subcellular location is the cytoplasm. It carries out the reaction cytidine(1402) in 16S rRNA + S-adenosyl-L-methionine = N(4)-methylcytidine(1402) in 16S rRNA + S-adenosyl-L-homocysteine + H(+). Its function is as follows. Specifically methylates the N4 position of cytidine in position 1402 (C1402) of 16S rRNA. This chain is Ribosomal RNA small subunit methyltransferase H, found in Streptococcus uberis (strain ATCC BAA-854 / 0140J).